The sequence spans 515 residues: Bifunctional NAD(P)H-hydrate repair enzyme Nnr (515 aa).

The NAD(P)H-hydrate epimerase stretch occupies residues Met1–Glu227. Positions Ile23 to Gly225 constitute a YjeF N-terminal domain. The segment at Asn71–Asp75 is NADPHX 1; for epimerase activity. Positions 72 and 135 each coordinate K(+). Positions Gly139–Ala145 are NADPHX 1; for epimerase activity. Asp168 is a (6S)-NADPHX binding site. K(+) is bound at residue Ser171. In terms of domain architecture, YjeF C-terminal spans Ser234–Glu501. The interval Ala235–Pro515 is ADP-dependent (S)-NAD(P)H-hydrate dehydratase. Gly329 contributes to the (6S)-NADPHX binding site. Positions His375 to Arg381 are NADPHX 2; for dehydratase activity. ADP contacts are provided by residues Lys412 to Thr416 and Asn432 to Gly441. Asp442 is a binding site for (6S)-NADPHX.

This sequence in the N-terminal section; belongs to the NnrE/AIBP family. It in the C-terminal section; belongs to the NnrD/CARKD family. It depends on K(+) as a cofactor.

The enzyme catalyses (6S)-NADHX + ADP = AMP + phosphate + NADH + H(+). It catalyses the reaction (6S)-NADPHX + ADP = AMP + phosphate + NADPH + H(+). It carries out the reaction (6R)-NADHX = (6S)-NADHX. The catalysed reaction is (6R)-NADPHX = (6S)-NADPHX. Bifunctional enzyme that catalyzes the epimerization of the S- and R-forms of NAD(P)HX and the dehydration of the S-form of NAD(P)HX at the expense of ADP, which is converted to AMP. This allows the repair of both epimers of NAD(P)HX, a damaged form of NAD(P)H that is a result of enzymatic or heat-dependent hydration. The polypeptide is Bifunctional NAD(P)H-hydrate repair enzyme Nnr (nnr) (Escherichia coli (strain K12)).